A 408-amino-acid chain; its full sequence is RUN domain-containing protein 3B (408 aa).

The segment at 1–25 (MASRSLGGLSGSRGGGGGGGGKKSL) is disordered. Over residues 8 to 22 (GLSGSRGGGGGGGGK) the composition is skewed to gly residues. Arginine 13 is modified (omega-N-methylarginine). Residues 58–190 (DDSSPEFNNF…IDFSFCLKGE (133 aa)) form the RUN domain. Residues 213–238 (DSISSDEEELRTFGSSDSESSTPENV) form a disordered region. Residues serine 216 and serine 217 each carry the phosphoserine modification. Residues 225-236 (FGSSDSESSTPE) are compositionally biased toward polar residues. The stretch at 301-326 (AHKLEKEQLEYIIVELQDQLKSYQSL) forms a coiled coil. Residues 337–359 (QASLDPSHSQEGDGKQDSLNFIG) are disordered.

It belongs to the RUNDC3 family. In terms of assembly, interacts with RAP2A.

The protein is RUN domain-containing protein 3B (Rundc3b) of Mus musculus (Mouse).